Consider the following 165-residue polypeptide: Ribosome maturation factor RimM (165 aa).

Residues 94-165 form the PRC barrel domain; the sequence is EDEFYIADLN…YVILNYQTKV (72 aa).

It belongs to the RimM family. In terms of assembly, binds ribosomal protein uS19.

The protein resides in the cytoplasm. An accessory protein needed during the final step in the assembly of 30S ribosomal subunit, possibly for assembly of the head region. Essential for efficient processing of 16S rRNA. May be needed both before and after RbfA during the maturation of 16S rRNA. It has affinity for free ribosomal 30S subunits but not for 70S ribosomes. The polypeptide is Ribosome maturation factor RimM (Rickettsia typhi (strain ATCC VR-144 / Wilmington)).